A 169-amino-acid polypeptide reads, in one-letter code: S-ribosylhomocysteine lyase (169 aa).

Fe cation-binding residues include histidine 54, histidine 58, and cysteine 128.

The protein belongs to the LuxS family. As to quaternary structure, homodimer. The cofactor is Fe cation.

The enzyme catalyses S-(5-deoxy-D-ribos-5-yl)-L-homocysteine = (S)-4,5-dihydroxypentane-2,3-dione + L-homocysteine. In terms of biological role, involved in the synthesis of autoinducer 2 (AI-2) which is secreted by bacteria and is used to communicate both the cell density and the metabolic potential of the environment. The regulation of gene expression in response to changes in cell density is called quorum sensing. Catalyzes the transformation of S-ribosylhomocysteine (RHC) to homocysteine (HC) and 4,5-dihydroxy-2,3-pentadione (DPD). The polypeptide is S-ribosylhomocysteine lyase (Aeromonas hydrophila subsp. hydrophila (strain ATCC 7966 / DSM 30187 / BCRC 13018 / CCUG 14551 / JCM 1027 / KCTC 2358 / NCIMB 9240 / NCTC 8049)).